The primary structure comprises 184 residues: NADH-quinone oxidoreductase subunit B (184 aa).

4 residues coordinate [4Fe-4S] cluster: Cys-63, Cys-64, Cys-128, and Cys-158.

It belongs to the complex I 20 kDa subunit family. NDH-1 is composed of 14 different subunits. Subunits NuoB, C, D, E, F, and G constitute the peripheral sector of the complex. The cofactor is [4Fe-4S] cluster.

It localises to the cell inner membrane. The catalysed reaction is a quinone + NADH + 5 H(+)(in) = a quinol + NAD(+) + 4 H(+)(out). Functionally, NDH-1 shuttles electrons from NADH, via FMN and iron-sulfur (Fe-S) centers, to quinones in the respiratory chain. The immediate electron acceptor for the enzyme in this species is believed to be ubiquinone. Couples the redox reaction to proton translocation (for every two electrons transferred, four hydrogen ions are translocated across the cytoplasmic membrane), and thus conserves the redox energy in a proton gradient. In Xylella fastidiosa (strain M23), this protein is NADH-quinone oxidoreductase subunit B.